The primary structure comprises 212 residues: Pyrrolidone-carboxylate peptidase (212 aa).

Residues Glu-80, Cys-143, and His-165 contribute to the active site.

The protein belongs to the peptidase C15 family. Homotetramer.

It is found in the cytoplasm. It catalyses the reaction Release of an N-terminal pyroglutamyl group from a polypeptide, the second amino acid generally not being Pro.. Removes 5-oxoproline from various penultimate amino acid residues except L-proline. The sequence is that of Pyrrolidone-carboxylate peptidase from Aliivibrio fischeri (strain MJ11) (Vibrio fischeri).